Consider the following 68-residue polypeptide: Large ribosomal subunit protein uL29 (68 aa).

It belongs to the universal ribosomal protein uL29 family.

The chain is Large ribosomal subunit protein uL29 from Prochlorococcus marinus (strain SARG / CCMP1375 / SS120).